We begin with the raw amino-acid sequence, 224 residues long: Small ribosomal subunit protein uS7 (224 aa).

The protein belongs to the universal ribosomal protein uS7 family. In terms of assembly, part of the 30S ribosomal subunit.

Its function is as follows. One of the primary rRNA binding proteins, it binds directly to 16S rRNA where it nucleates assembly of the head domain of the 30S subunit. Is located at the subunit interface close to the decoding center. The chain is Small ribosomal subunit protein uS7 from Caldivirga maquilingensis (strain ATCC 700844 / DSM 13496 / JCM 10307 / IC-167).